The following is a 267-amino-acid chain: tRNA pseudouridine synthase A (267 aa).

The active-site Nucleophile is Asp-51. Position 109 (Tyr-109) interacts with substrate.

This sequence belongs to the tRNA pseudouridine synthase TruA family. Homodimer.

The catalysed reaction is uridine(38/39/40) in tRNA = pseudouridine(38/39/40) in tRNA. Formation of pseudouridine at positions 38, 39 and 40 in the anticodon stem and loop of transfer RNAs. The sequence is that of tRNA pseudouridine synthase A from Staphylococcus epidermidis (strain ATCC 35984 / DSM 28319 / BCRC 17069 / CCUG 31568 / BM 3577 / RP62A).